Reading from the N-terminus, the 1209-residue chain is Calcium-activated potassium channel subunit alpha-1 (1209 aa).

The span at 1 to 23 shows a compositional bias: gly residues; that stretch reads MANGGGGGGGSSGGGGGGGGGSG. The interval 1-61 is disordered; that stretch reads MANGGGGGGG…SSSSSSSSSV (61 aa). At 1 to 86 the chain is on the extracellular side; that stretch reads MANGGGGGGG…VPCDSRGQRM (86 aa). The segment covering 25–39 has biased composition (polar residues); the sequence is RMSSNIHANNLSLDA. The segment covering 40 to 60 has biased composition (low complexity); sequence SSSSSSSSSSSSSSSSSSSSS. A helical membrane pass occupies residues 87 to 107; the sequence is WWAFLASSMVTFFGGLFIILL. The Cytoplasmic portion of the chain corresponds to 108-178; it reads WRTLKYLWTV…MISAQTLTGR (71 aa). 3 S-palmitoyl cysteine lipidation sites follow: Cys118, Cys119, and Cys121. A helical membrane pass occupies residues 179 to 199; sequence VLVVLVFALSIGALVIYFIDS. Over 200-214 the chain is Extracellular; that stretch reads SNPIESCQNFYKDFT. The chain crosses the membrane as a helical span at residues 215-235; that stretch reads LQIDMAFNVFFLLYFGLRFIA. Residues 236–239 lie on the Cytoplasmic side of the membrane; sequence ANDK. Residues 240–260 traverse the membrane as a helical segment; the sequence is LWFWLEVNSVVDFFTVPPVFV. Residues 261–264 lie on the Extracellular side of the membrane; the sequence is SVYL. A helical; Voltage-sensor transmembrane segment spans residues 265–285; that stretch reads NRSWLGLRFLRALRLIQFSEI. The Cytoplasmic segment spans residues 286-300; the sequence is LQFLNILKTSNSIKL. The chain crosses the membrane as a helical span at residues 301–321; the sequence is VNLLSIFISTWLTAAGFIHLV. The Extracellular portion of the chain corresponds to 322–335; it reads ENSGDPWENFQNNQ. The pore-forming intramembrane region spans 336-358; the sequence is ALTYWECVYLLMVTMSTVGYGDV. A Selectivity for potassium motif is present at residues 352–355; the sequence is TVGY. Residues 359–367 are Extracellular-facing; it reads YAKTTLGRL. Residues 368 to 388 traverse the membrane as a helical segment; that stretch reads FMVFFILGGLAMFASYVPEII. Topologically, residues 389–1209 are cytoplasmic; the sequence is ELIGNRKKYG…KQNRKEMVYR (821 aa). Residues 407-549 enclose the RCK N-terminal 1 domain; it reads RKHIVVCGHI…WNWKEGDDAI (143 aa). Mg(2+)-binding residues include Glu439, Gln462, and Glu464. The interval 556–576 is segment S7; that stretch reads LGFIAQSCLAQGLSTMLANLF. The segment at 613–633 is segment S8; sequence LSFPTVCELCFVKLKLLMIAI. The residue at position 670 (Asp670) is a Phosphothreonine. Position 672 is a phosphoserine (Lys672). Residues 681–685 form a heme-binding motif region; sequence CKACH. The segment at 703 to 733 is disordered; it reads EDEQPPTLSPKKKQRNGGMRNSPNTSPKLMR. Thr709 carries the post-translational modification Phosphothreonine. Ser711, Ser724, and Ser728 each carry phosphoserine. Positions 783 to 803 are segment S9; it reads VLSGHVVVCIFGDVSSALIGL. Positions 785–929 constitute an RCK N-terminal 2 domain; sequence SGHVVVCIFG…MDRSSPDNSP (145 aa). Thr916 carries the phosphothreonine modification. Phosphoserine is present on residues Ser924 and Ser928. The Calcium bowl signature appears at 976–998; the sequence is TELVNDTNVQFLDQDDDDDPDTE. Ca(2+) is bound by residues Gln985, Asp988, Asp991, and Asp993. Positions 1005–1025 are segment S10; the sequence is FACGTAFAVSVLDSLMSATYF. Over residues 1159–1184 the composition is skewed to low complexity; that stretch reads RASLSHSSHSSQSSSKKSSSVHSIPS. A disordered region spans residues 1159–1209; sequence RASLSHSSHSSQSSSKKSSSVHSIPSTANRPNRPKSRESRDKQNRKEMVYR. Residues 1193–1209 show a composition bias toward basic and acidic residues; that stretch reads KSRESRDKQNRKEMVYR. 2 positions are modified to phosphoserine: Ser1194 and Ser1197.

Belongs to the potassium channel family. Calcium-activated (TC 1.A.1.3) subfamily. KCa1.1/KCNMA1 sub-subfamily. Homotetramer; which constitutes the calcium-activated potassium channel. Interacts with beta subunits KCNMB1, KCNMB2, KCNMB3 and KCNMB4. Interacts with gamma subunits LRRC26, LRRC38, LRRC52 and LRRC55. Beta and gamma subunits are accessory, and modulate its activity. Interacts with RAB11B. Phosphorylated. Phosphorylation by kinases such as PKA and/or PKG. In smooth muscles, phosphorylation affects its activity. In terms of processing, palmitoylation by ZDHHC22 and ZDHHC23 within the intracellular linker between the S0 and S1 transmembrane domains regulates localization to the plasma membrane. Depalmitoylated by LYPLA1 and LYPLAL1, leading to retard exit from the trans-Golgi network.

The protein localises to the cell membrane. It carries out the reaction K(+)(in) = K(+)(out). Ethanol and carbon monoxide-bound heme increase channel activation. Heme inhibits channel activation. Potassium channel activated by both membrane depolarization or increase in cytosolic Ca(2+) that mediates export of K(+). It is also activated by the concentration of cytosolic Mg(2+). Its activation dampens the excitatory events that elevate the cytosolic Ca(2+) concentration and/or depolarize the cell membrane. It therefore contributes to repolarization of the membrane potential. Plays a key role in controlling excitability in a number of systems, such as regulation of the contraction of smooth muscle, the tuning of hair cells in the cochlea, regulation of transmitter release, and innate immunity. In smooth muscles, its activation by high level of Ca(2+), caused by ryanodine receptors in the sarcoplasmic reticulum, regulates the membrane potential. In cochlea cells, its number and kinetic properties partly determine the characteristic frequency of each hair cell and thereby helps to establish a tonotopic map. Kinetics of KCNMA1 channels are determined by alternative splicing, phosphorylation status and its combination with modulating beta subunits. Highly sensitive to both iberiotoxin (IbTx) and charybdotoxin (CTX). Its function is as follows. Potassium channel activated by both membrane depolarization or increase in cytosolic Ca(2+) that mediates export of K(+). The polypeptide is Calcium-activated potassium channel subunit alpha-1 (Kcnma1) (Mus musculus (Mouse)).